The chain runs to 83 residues: Small ribosomal subunit protein bS16 (83 aa).

This sequence belongs to the bacterial ribosomal protein bS16 family.

This is Small ribosomal subunit protein bS16 from Shewanella frigidimarina (strain NCIMB 400).